The primary structure comprises 285 residues: Ribosomal RNA small subunit methyltransferase A (285 aa).

S-adenosyl-L-methionine-binding residues include N29, L31, G56, E77, D102, and N123.

This sequence belongs to the class I-like SAM-binding methyltransferase superfamily. rRNA adenine N(6)-methyltransferase family. RsmA subfamily.

The protein localises to the cytoplasm. The enzyme catalyses adenosine(1518)/adenosine(1519) in 16S rRNA + 4 S-adenosyl-L-methionine = N(6)-dimethyladenosine(1518)/N(6)-dimethyladenosine(1519) in 16S rRNA + 4 S-adenosyl-L-homocysteine + 4 H(+). In terms of biological role, specifically dimethylates two adjacent adenosines (A1518 and A1519) in the loop of a conserved hairpin near the 3'-end of 16S rRNA in the 30S particle. May play a critical role in biogenesis of 30S subunits. This Clostridium perfringens (strain ATCC 13124 / DSM 756 / JCM 1290 / NCIMB 6125 / NCTC 8237 / Type A) protein is Ribosomal RNA small subunit methyltransferase A.